We begin with the raw amino-acid sequence, 488 residues long: N-succinylglutamate 5-semialdehyde dehydrogenase (488 aa).

Residue 221–226 (GSSRTG) coordinates NAD(+). Residues E244 and C278 contribute to the active site.

Belongs to the aldehyde dehydrogenase family. AstD subfamily.

It carries out the reaction N-succinyl-L-glutamate 5-semialdehyde + NAD(+) + H2O = N-succinyl-L-glutamate + NADH + 2 H(+). Its pathway is amino-acid degradation; L-arginine degradation via AST pathway; L-glutamate and succinate from L-arginine: step 4/5. In terms of biological role, catalyzes the NAD-dependent reduction of succinylglutamate semialdehyde into succinylglutamate. This is N-succinylglutamate 5-semialdehyde dehydrogenase from Pseudomonas savastanoi pv. phaseolicola (strain 1448A / Race 6) (Pseudomonas syringae pv. phaseolicola (strain 1448A / Race 6)).